A 259-amino-acid chain; its full sequence is MNILLAFKAEPDAGMLAEKEWQAAAQGKSGPDISLLRSLLGADEQAAAALLLAQRKNGTPMSLTALSMGDERALHWLRYLMALGFEEAVLLETAADLRFAPEFVARHIAEWQHQNPLDLIITGCQSSEGQNGQTPFLLAEMLGWPCFTQVERFTLDALFITLEQRTEHGLRCCRVRLPAVIAVRQCGEVALPVPGMRQRMAAGKAEIIRKTVAAEMPAMQCLQLARAEQRRGATLIDGQTVAEKAQKLWQDYLRQRMQP.

It belongs to the ETF beta-subunit/FixA family. In terms of assembly, ygcQ and YgcR form a heterodimer.

Functionally, may play a role in a redox process. In Escherichia coli (strain K12), this protein is Putative electron transfer flavoprotein subunit YgcR (ygcR).